A 72-amino-acid chain; its full sequence is Osmotically-inducible lipoprotein B (72 aa).

Positions 1 to 23 (MFMTSKKMAAAVLAITVAMSLSA) are cleaved as a signal peptide. C24 is lipidated: N-palmitoyl cysteine. Residue C24 is the site of S-diacylglycerol cysteine attachment.

It localises to the cell membrane. Provides resistance to osmotic stress. May be important for stationary-phase survival. The polypeptide is Osmotically-inducible lipoprotein B (osmB) (Salmonella typhimurium (strain LT2 / SGSC1412 / ATCC 700720)).